A 94-amino-acid polypeptide reads, in one-letter code: Co-chaperonin GroES (94 aa).

It belongs to the GroES chaperonin family. Heptamer of 7 subunits arranged in a ring. Interacts with the chaperonin GroEL.

The protein localises to the cytoplasm. Functionally, together with the chaperonin GroEL, plays an essential role in assisting protein folding. The GroEL-GroES system forms a nano-cage that allows encapsulation of the non-native substrate proteins and provides a physical environment optimized to promote and accelerate protein folding. GroES binds to the apical surface of the GroEL ring, thereby capping the opening of the GroEL channel. The chain is Co-chaperonin GroES from Streptococcus pneumoniae (strain ATCC 700669 / Spain 23F-1).